Consider the following 434-residue polypeptide: Glucose-1-phosphate adenylyltransferase (434 aa).

Residues tyrosine 112, glycine 178, glutamate 193–lysine 194, and serine 211 each bind alpha-D-glucose 1-phosphate.

Belongs to the bacterial/plant glucose-1-phosphate adenylyltransferase family. As to quaternary structure, homotetramer.

The catalysed reaction is alpha-D-glucose 1-phosphate + ATP + H(+) = ADP-alpha-D-glucose + diphosphate. It participates in glycan biosynthesis; glycogen biosynthesis. Functionally, involved in the biosynthesis of ADP-glucose, a building block required for the elongation reactions to produce glycogen. Catalyzes the reaction between ATP and alpha-D-glucose 1-phosphate (G1P) to produce pyrophosphate and ADP-Glc. This is Glucose-1-phosphate adenylyltransferase from Mannheimia succiniciproducens (strain KCTC 0769BP / MBEL55E).